Here is a 185-residue protein sequence, read N- to C-terminus: Transcription termination/antitermination protein NusG (185 aa).

In terms of domain architecture, KOW spans 133 to 161 (PGEEVRVTEGPFADFNGTVEEVDYEKGRL).

It belongs to the NusG family.

Functionally, participates in transcription elongation, termination and antitermination. The chain is Transcription termination/antitermination protein NusG from Haemophilus influenzae (strain ATCC 51907 / DSM 11121 / KW20 / Rd).